The sequence spans 202 residues: MALQETIEQTVTGLGYELVEIERTSGGLLRVTIDMPYLAGTAPGAEQFINAEDCEKVTRQLQFVLEVEGAEYSRLEVSSPGIDRPLRSEKDFERFAGELIDITLKAPIGVAASAGSTVSASRKKFRGTLERAEPVDGKPGWQIVWSDEPAVKPGQKISKKRIPAPLQALGFTLDEINQARLAPVVDFKGRRPKSVADTSIDK.

Belongs to the RimP family.

It is found in the cytoplasm. Its function is as follows. Required for maturation of 30S ribosomal subunits. The protein is Ribosome maturation factor RimP of Polaromonas naphthalenivorans (strain CJ2).